Here is a 308-residue protein sequence, read N- to C-terminus: 2-dehydro-3-deoxy-phosphogluconate/2-dehydro-3-deoxy-6-phosphogalactonate aldolase (308 aa).

Substrate contacts are provided by residues Thr57 to Thr58, Tyr144 to Tyr146, and Lys169 to Thr171. The Schiff-base intermediate with substrate role is filled by Lys169.

This sequence belongs to the DapA family. KDPG aldolase subfamily. Homotetramer; dimer of dimers.

It catalyses the reaction 2-dehydro-3-deoxy-6-phospho-D-gluconate = D-glyceraldehyde 3-phosphate + pyruvate. It carries out the reaction 2-dehydro-3-deoxy-6-phospho-D-galactonate = D-glyceraldehyde 3-phosphate + pyruvate. Its pathway is carbohydrate acid metabolism; 2-dehydro-3-deoxy-D-gluconate degradation; D-glyceraldehyde 3-phosphate and pyruvate from 2-dehydro-3-deoxy-D-gluconate: step 2/2. Involved in the degradation of glucose and galactose via the Entner-Doudoroff pathway. Catalyzes the reversible cleavage of 2-keto-3-deoxy-6-phosphogluconate (KDPG) and 2-keto-3-deoxygluconate (KDG) forming pyruvate and glyceraldehyde 3-phosphate or glyceraldehyde, respectively. It is also able to catalyze the reversible cleavage of 2-keto-3-deoxy-6-phosphogalactonate (KDPGal) and 2-keto-3-deoxygalactonate (KDGal). The protein is 2-dehydro-3-deoxy-phosphogluconate/2-dehydro-3-deoxy-6-phosphogalactonate aldolase (eda) of Saccharolobus solfataricus (strain ATCC 35092 / DSM 1617 / JCM 11322 / P2) (Sulfolobus solfataricus).